Consider the following 237-residue polypeptide: Ubiquitin-conjugating enzyme E2 34 (237 aa).

The UBC core domain occupies 5–162 (ACIKRLQKEY…FPEYVEKYNQ (158 aa)). The active-site Glycyl thioester intermediate is the C87. The segment at 168–207 (QATTQLTTPESPQKSDTKVESEKTIDPTKGDSEGGLKERK) is disordered. The span at 180–204 (QKSDTKVESEKTIDPTKGDSEGGLK) shows a compositional bias: basic and acidic residues. The helical transmembrane segment at 214-234 (LPAWIILLLVSVFGVVMALPL) threads the bilayer.

It belongs to the ubiquitin-conjugating enzyme family.

It localises to the membrane. It catalyses the reaction S-ubiquitinyl-[E1 ubiquitin-activating enzyme]-L-cysteine + [E2 ubiquitin-conjugating enzyme]-L-cysteine = [E1 ubiquitin-activating enzyme]-L-cysteine + S-ubiquitinyl-[E2 ubiquitin-conjugating enzyme]-L-cysteine.. The protein operates within protein modification; protein ubiquitination. In terms of biological role, accepts the ubiquitin from the E1 complex and catalyzes its covalent attachment to other proteins. The protein is Ubiquitin-conjugating enzyme E2 34 (UBC34) of Arabidopsis thaliana (Mouse-ear cress).